An 84-amino-acid chain; its full sequence is Small ribosomal subunit protein bS20 (84 aa).

The segment covering 62–72 has biased composition (basic residues); sequence KNKARRLKSRA. Residues 62–84 are disordered; it reads KNKARRLKSRAARWSNSATAASR. Over residues 75–84 the composition is skewed to polar residues; the sequence is WSNSATAASR.

It belongs to the bacterial ribosomal protein bS20 family.

In terms of biological role, binds directly to 16S ribosomal RNA. This is Small ribosomal subunit protein bS20 from Mycoplasmoides gallisepticum (strain R(low / passage 15 / clone 2)) (Mycoplasma gallisepticum).